The sequence spans 505 residues: Lysine--tRNA ligase (505 aa).

Mg(2+) is bound by residues Glu-415 and Glu-422.

The protein belongs to the class-II aminoacyl-tRNA synthetase family. Homodimer. Requires Mg(2+) as cofactor.

The protein localises to the cytoplasm. The catalysed reaction is tRNA(Lys) + L-lysine + ATP = L-lysyl-tRNA(Lys) + AMP + diphosphate. The chain is Lysine--tRNA ligase (lysS) from Escherichia coli (strain K12).